The sequence spans 514 residues: Na(+)/H(+) antiporter NhaB (514 aa).

12 helical membrane-spanning segments follow: residues 23 to 43 (LALL…PFIA), 63 to 83 (PLLP…TSAA), 97 to 117 (LLLM…LFIF), 120 to 140 (LLLS…AAAF), 144 to 164 (FLDA…FYGI), 202 to 222 (LMMH…VGEP), 238 to 258 (FFLR…LTCM), 303 to 323 (AIIG…VGLI), 357 to 377 (LTVF…APII), 391 to 411 (LFYL…VGTI), 447 to 467 (ATPN…APLI), and 475 to 495 (VWMA…CVEF).

It belongs to the NhaB Na(+)/H(+) (TC 2.A.34) antiporter family.

Its subcellular location is the cell inner membrane. The catalysed reaction is 2 Na(+)(in) + 3 H(+)(out) = 2 Na(+)(out) + 3 H(+)(in). In terms of biological role, na(+)/H(+) antiporter that extrudes sodium in exchange for external protons. This Salmonella heidelberg (strain SL476) protein is Na(+)/H(+) antiporter NhaB.